A 223-amino-acid chain; its full sequence is N-terminal Xaa-Pro-Lys N-methyltransferase 1-B (223 aa).

S-adenosyl-L-methionine is bound by residues glycine 69, arginine 74, 91–93 (DVT), 119–120 (LQ), and glutamine 135.

It belongs to the methyltransferase superfamily. NTM1 family.

The protein resides in the nucleus. It carries out the reaction N-terminal L-alanyl-L-prolyl-L-lysyl-[protein] + 3 S-adenosyl-L-methionine = N-terminal N,N,N-trimethyl-L-alanyl-L-prolyl-L-lysyl-[protein] + 3 S-adenosyl-L-homocysteine + 3 H(+). It catalyses the reaction N-terminal L-seryl-L-prolyl-L-lysyl-[protein] + 3 S-adenosyl-L-methionine = N-terminal N,N,N-trimethyl-L-seryl-L-prolyl-L-lysyl-[protein] + 3 S-adenosyl-L-homocysteine + 3 H(+). The enzyme catalyses N-terminal L-prolyl-L-prolyl-L-lysyl-[protein] + 2 S-adenosyl-L-methionine = N-terminal N,N-dimethyl-L-prolyl-L-prolyl-L-lysyl-[protein] + 2 S-adenosyl-L-homocysteine + 2 H(+). Functionally, distributive alpha-N-methyltransferase that methylates the N-terminus of target proteins containing the N-terminal motif [Ala/Gly/Pro/Ser]-Pro-Lys when the initiator Met is cleaved. Specifically catalyzes mono-, di- or tri-methylation of the exposed alpha-amino group of the Ala, Gly or Ser residue in the [Ala/Gly/Ser]-Pro-Lys motif and mono- or di-methylation of Pro in the Pro-Pro-Lys motif. Required during mitosis for normal bipolar spindle formation and chromosome segregation via its action on target proteins. The chain is N-terminal Xaa-Pro-Lys N-methyltransferase 1-B (ntmt1-b) from Xenopus laevis (African clawed frog).